The chain runs to 234 residues: Leucyl/phenylalanyl-tRNA--protein transferase (234 aa).

Belongs to the L/F-transferase family.

The protein localises to the cytoplasm. The enzyme catalyses N-terminal L-lysyl-[protein] + L-leucyl-tRNA(Leu) = N-terminal L-leucyl-L-lysyl-[protein] + tRNA(Leu) + H(+). It carries out the reaction N-terminal L-arginyl-[protein] + L-leucyl-tRNA(Leu) = N-terminal L-leucyl-L-arginyl-[protein] + tRNA(Leu) + H(+). It catalyses the reaction L-phenylalanyl-tRNA(Phe) + an N-terminal L-alpha-aminoacyl-[protein] = an N-terminal L-phenylalanyl-L-alpha-aminoacyl-[protein] + tRNA(Phe). Functions in the N-end rule pathway of protein degradation where it conjugates Leu, Phe and, less efficiently, Met from aminoacyl-tRNAs to the N-termini of proteins containing an N-terminal arginine or lysine. The sequence is that of Leucyl/phenylalanyl-tRNA--protein transferase from Syntrophobacter fumaroxidans (strain DSM 10017 / MPOB).